Reading from the N-terminus, the 297-residue chain is MPELPEVETVKRGLAPSMEGRRLTRLELRRTDLRFPLPVDFAARTQGRLIVSLSRRAKYLLIDLDDGVSIVSHLGMSGSYRIEAANETGLPGQFHMARSRDEKHDHVIFHLSGPEGDPLRVIYNDPRRFGFMDMVERRHMDRHAAFAGLGPEPVGNALDADYLAFRFKGKAQPLKTALLDQKVIAGLGNIYVCEALWRAHLSPETPARALVNAEGKPVAALEDLTQAIRTVIAEAIEAGGSSLRDHIQADGSLGYFQHSFNVYDREGEACRTPGCTGTVERMTQAGRSTFHCPQCQR.

The active-site Schiff-base intermediate with DNA is proline 2. Glutamate 3 functions as the Proton donor in the catalytic mechanism. Residue lysine 58 is the Proton donor; for beta-elimination activity of the active site. 3 residues coordinate DNA: histidine 104, arginine 127, and lysine 170. An FPG-type zinc finger spans residues asparagine 261 to arginine 297. Catalysis depends on arginine 287, which acts as the Proton donor; for delta-elimination activity.

It belongs to the FPG family. As to quaternary structure, monomer. Zn(2+) serves as cofactor.

The enzyme catalyses Hydrolysis of DNA containing ring-opened 7-methylguanine residues, releasing 2,6-diamino-4-hydroxy-5-(N-methyl)formamidopyrimidine.. It catalyses the reaction 2'-deoxyribonucleotide-(2'-deoxyribose 5'-phosphate)-2'-deoxyribonucleotide-DNA = a 3'-end 2'-deoxyribonucleotide-(2,3-dehydro-2,3-deoxyribose 5'-phosphate)-DNA + a 5'-end 5'-phospho-2'-deoxyribonucleoside-DNA + H(+). In terms of biological role, involved in base excision repair of DNA damaged by oxidation or by mutagenic agents. Acts as a DNA glycosylase that recognizes and removes damaged bases. Has a preference for oxidized purines, such as 7,8-dihydro-8-oxoguanine (8-oxoG). Has AP (apurinic/apyrimidinic) lyase activity and introduces nicks in the DNA strand. Cleaves the DNA backbone by beta-delta elimination to generate a single-strand break at the site of the removed base with both 3'- and 5'-phosphates. This Allorhizobium ampelinum (strain ATCC BAA-846 / DSM 112012 / S4) (Agrobacterium vitis (strain S4)) protein is Formamidopyrimidine-DNA glycosylase.